We begin with the raw amino-acid sequence, 1007 residues long: Beta-galactosidase (1007 aa).

The segment at 29 to 48 (TIPPHSDHESFQSQEELEEG) is disordered. Glu465 serves as the catalytic Proton donor. Glu532 acts as the Nucleophile in catalysis.

This sequence belongs to the glycosyl hydrolase 2 family. Monomer.

The enzyme catalyses Hydrolysis of terminal non-reducing beta-D-galactose residues in beta-D-galactosides.. This chain is Beta-galactosidase (lacZ), found in Lactobacillus delbrueckii subsp. bulgaricus.